The chain runs to 1141 residues: Sterol regulatory element-binding protein 2 (1141 aa).

The tract at residues Met-1–Leu-50 is transcriptional activation (acidic). Residues Met-1–Arg-479 are Cytoplasmic-facing. Residues Glu-48–Gln-144 are disordered. A compositionally biased stretch (low complexity) spans Ser-63–Gly-82. Over residues Val-88–Leu-97 the composition is skewed to polar residues. Over residues Pro-98–Pro-110 the composition is skewed to low complexity. Over residues Val-114–Arg-126 the composition is skewed to polar residues. An interaction with LMNA region spans residues Gln-237–Cys-491. The bHLH domain maps to Glu-330 to Leu-380. The leucine-zipper stretch occupies residues Leu-380–Asn-401. A Glycyl lysine isopeptide (Lys-Gly) (interchain with G-Cter in SUMO2) cross-link involves residue Lys-464. A helical transmembrane segment spans residues Ser-480–Leu-500. At Leu-501–Asp-533 the chain is on the lumenal side. Residues Trp-534 to Val-554 form a helical membrane-spanning segment. Over Lys-555–Ala-1139 the chain is Cytoplasmic. Ser-855 and Ser-1098 each carry phosphoserine.

The protein belongs to the SREBP family. Forms a tight complex with SCAP, the SCAP-SREBP complex, in the endoplasmic reticulum membrane and the Golgi apparatus. Interacts with PAQR3; the interaction anchors the SCAP-SREBP complex to the Golgi apparatus in low cholesterol conditions. Interacts (via C-terminal domain) with RNF139. As to quaternary structure, homodimer; efficient DNA binding of the soluble transcription factor fragment requires dimerization with another bHLH protein. Interacts with LMNA. Processed in the Golgi apparatus, releasing the protein from the membrane. At low cholesterol the SCAP-SREBP complex is recruited into COPII vesicles for export from the endoplasmic reticulum. In the Golgi, complex SREBPs are cleaved sequentially by site-1 (MBTPS1, S1P) and site-2 (MBTPS2, S2P) protease. The first cleavage by site-1 protease occurs within the luminal loop, the second cleavage by site-2 protease occurs within the first transmembrane domain, releasing the transcription factor from the Golgi membrane. Apoptosis triggers cleavage by the cysteine proteases caspase-3 and caspase-7. Cleavage and activation is induced by mediated cholesterol efflux. In terms of processing, phosphorylated by AMPK, leading to suppress protein processing and nuclear translocation, and repress target gene expression. Post-translationally, SCAP-free SREBF2 is ubiquitinated by the BCR(ARMC5) complex, leading to its degradation. Ubiquitinated; the nuclear form has a rapid turnover and is rapidly ubiquitinated and degraded by the proteasome in the nucleus. As to expression, ubiquitously expressed in adult and fetal tissues.

The protein resides in the endoplasmic reticulum membrane. It is found in the golgi apparatus membrane. It localises to the cytoplasmic vesicle. The protein localises to the COPII-coated vesicle membrane. Its subcellular location is the nucleus. Activation by cleavage is down-regulated upon activation of SIRT3-dependent PRKAA1/AMPK-alpha signaling cascade which leads to inhibition of ATP-consuming lipogenesis to restore cellular energy balance. Functionally, precursor of the transcription factor form (Processed sterol regulatory element-binding protein 2), which is embedded in the endoplasmic reticulum membrane. Low sterol concentrations promote processing of this form, releasing the transcription factor form that translocates into the nucleus and activates transcription of genes involved in cholesterol biosynthesis. Its function is as follows. Key transcription factor that regulates expression of genes involved in cholesterol biosynthesis. Binds to the sterol regulatory element 1 (SRE-1) (5'-ATCACCCCAC-3'). Has dual sequence specificity binding to both an E-box motif (5'-ATCACGTGA-3') and to SRE-1 (5'-ATCACCCCAC-3'). Regulates transcription of genes related to cholesterol synthesis pathway. This Homo sapiens (Human) protein is Sterol regulatory element-binding protein 2.